The following is a 91-amino-acid chain: DNA-binding protein HU (91 aa).

Belongs to the bacterial histone-like protein family.

Histone-like DNA-binding protein which is capable of wrapping DNA to stabilize it, and thus to prevent its denaturation under extreme environmental conditions. Also seems to act as a fortuitous virulence factor in delayed sequelae by binding to heparan sulfate-proteoglycans in the extracellular matrix of target organs and acting as a nidus for in situ immune complex formation. This Streptococcus gordonii protein is DNA-binding protein HU (hup).